The primary structure comprises 69 residues: Regulatory protein MokC (69 aa).

A helical membrane pass occupies residues 24–44 (KAMIVALIVICITAVVAALVT).

The protein belongs to the Hok/Gef family.

The protein localises to the cell inner membrane. Its function is as follows. Might be the toxic component of a type I toxin-antitoxin (TA) system. Regulatory peptide which completely overlaps hokC and enables hokC expression. The protein is Regulatory protein MokC (mokC) of Escherichia coli (strain K12).